Consider the following 147-residue polypeptide: Austinoid biosynthesis cluster protein H (147 aa).

This sequence belongs to the trt14 isomerase family. In terms of assembly, homodimer.

It functions in the pathway secondary metabolite biosynthesis; terpenoid biosynthesis. Functionally, part of the gene cluster that mediates the biosynthesis of calidodehydroaustin, a fungal meroterpenoid. The first step of the pathway is the synthesis of 3,5-dimethylorsellinic acid by the polyketide synthase ausA. 3,5-dimethylorsellinic acid is then prenylated by the polyprenyl transferase ausN. Further epoxidation by the FAD-dependent monooxygenase ausM and cyclization by the probable terpene cyclase ausL lead to the formation of protoaustinoid A. Protoaustinoid A is then oxidized to spiro-lactone preaustinoid A3 by the combined action of the FAD-binding monooxygenases ausB and ausC, and the dioxygenase ausE. Acid-catalyzed keto-rearrangement and ring contraction of the tetraketide portion of preaustinoid A3 by ausJ lead to the formation of preaustinoid A4. The aldo-keto reductase ausK, with the help of ausH, is involved in the next step by transforming preaustinoid A4 into isoaustinone which is in turn hydroxylated by the P450 monooxygenase ausI to form austinolide. The cytochrome P450 monooxygenase ausG modifies austinolide to austinol. Austinol is further acetylated to austin by the O-acetyltransferase ausP, which spontaneously changes to dehydroaustin. The cytochrome P450 monooxygenase ausR then converts dehydroaustin is into 7-dehydrodehydroaustin. The hydroxylation catalyzed by ausR permits the O-acetyltransferase ausQ to add an additional acetyl group to the molecule, leading to the formation of acetoxydehydroaustin. The short chain dehydrogenase ausT catalyzes the reduction of the double bond present between carbon atoms 1 and 2 to convert 7-dehydrodehydroaustin into 1,2-dihydro-7-hydroxydehydroaustin. AusQ catalyzes not only an acetylation reaction but also the addition of the PKS ausV diketide product to 1,2-dihydro-7-hydroxydehydroaustin, forming precalidodehydroaustin. Finally, the iron/alpha-ketoglutarate-dependent dioxygenase converts precalidodehydroaustin into calidodehydroaustin. The chain is Austinoid biosynthesis cluster protein H from Aspergillus calidoustus.